Consider the following 209-residue polypeptide: Histidine biosynthesis bifunctional protein HisIE (209 aa).

The tract at residues 1 to 116 is phosphoribosyl-AMP cyclohydrolase; that stretch reads MKQADELRFN…EEQAADRFGI (116 aa). Residues 117-209 are phosphoribosyl-ATP pyrophosphohydrolase; it reads MNELERVIAE…LKKRHSEIEE (93 aa).

The protein in the N-terminal section; belongs to the PRA-CH family. This sequence in the C-terminal section; belongs to the PRA-PH family.

It is found in the cytoplasm. It catalyses the reaction 1-(5-phospho-beta-D-ribosyl)-ATP + H2O = 1-(5-phospho-beta-D-ribosyl)-5'-AMP + diphosphate + H(+). It carries out the reaction 1-(5-phospho-beta-D-ribosyl)-5'-AMP + H2O = 1-(5-phospho-beta-D-ribosyl)-5-[(5-phospho-beta-D-ribosylamino)methylideneamino]imidazole-4-carboxamide. It participates in amino-acid biosynthesis; L-histidine biosynthesis; L-histidine from 5-phospho-alpha-D-ribose 1-diphosphate: step 2/9. It functions in the pathway amino-acid biosynthesis; L-histidine biosynthesis; L-histidine from 5-phospho-alpha-D-ribose 1-diphosphate: step 3/9. The polypeptide is Histidine biosynthesis bifunctional protein HisIE (hisI) (Bacillus subtilis (strain 168)).